Here is a 351-residue protein sequence, read N- to C-terminus: Methionine import ATP-binding protein MetN (351 aa).

Residues V4–V249 enclose the ABC transporter domain. An ATP-binding site is contributed by G41–S48.

This sequence belongs to the ABC transporter superfamily. Methionine importer (TC 3.A.1.24) family. As to quaternary structure, the complex is composed of two ATP-binding proteins (MetN), two transmembrane proteins (MetI) and a solute-binding protein (MetQ).

It is found in the cell membrane. The catalysed reaction is L-methionine(out) + ATP + H2O = L-methionine(in) + ADP + phosphate + H(+). The enzyme catalyses D-methionine(out) + ATP + H2O = D-methionine(in) + ADP + phosphate + H(+). In terms of biological role, part of the ABC transporter complex MetNIQ involved in methionine import. Responsible for energy coupling to the transport system. The sequence is that of Methionine import ATP-binding protein MetN from Lactobacillus delbrueckii subsp. bulgaricus (strain ATCC 11842 / DSM 20081 / BCRC 10696 / JCM 1002 / NBRC 13953 / NCIMB 11778 / NCTC 12712 / WDCM 00102 / Lb 14).